Consider the following 231-residue polypeptide: Sugar fermentation stimulation protein homolog (231 aa).

The protein belongs to the SfsA family.

This chain is Sugar fermentation stimulation protein homolog, found in Geotalea uraniireducens (strain Rf4) (Geobacter uraniireducens).